A 459-amino-acid chain; its full sequence is Hemopexin (459 aa).

Positions 1–23 (MARALRVPVALWLLGLCWSLAKA) are cleaved as a signal peptide. Intrachain disulfides connect cysteine 52–cysteine 232, cysteine 150–cysteine 155, and cysteine 189–cysteine 201. Hemopexin repeat units follow at residues 55–95 (GWGF…WKDA), 96–140 (PSPV…FPGI), 141–185 (PFPL…SWPA), and 186–232 (VGNC…FMSC). Histidine 81 is a binding site for heme. Residue histidine 151 coordinates heme. Residue asparagine 188 is glycosylated (N-linked (GlcNAc...) asparagine). N-linked (GlcNAc...) asparagine glycosylation is present at asparagine 218. Histidine 237 lines the heme pocket. The N-linked (GlcNAc...) asparagine glycan is linked to asparagine 241. 3 cysteine pairs are disulfide-bonded: cysteine 250–cysteine 453, cysteine 359–cysteine 401, and cysteine 411–cysteine 428. Hemopexin repeat units lie at residues 252 to 297 (PHLV…WPQG), 298 to 345 (PSTV…FGSP), 350 to 389 (LHSVDAAFTCPGSSQLYIMAGQKLWRLDLNLGAQATWTEL), and 393 to 444 (HTKV…LPQA). Histidine 286 is a binding site for heme.

The protein belongs to the hemopexin family.

The protein localises to the secreted. Its function is as follows. Binds heme and transports it to the liver for breakdown and iron recovery, after which the free hemopexin returns to the circulation. This Bos taurus (Bovine) protein is Hemopexin (HPX).